The following is a 558-amino-acid chain: MSFLVVVPEFLTSAAADVENIGSTLRAANAAAAASTTALAAAGADEVSAAVAALFARFGQEYQAVSAQASAFHQQFVQTLNSASGSYAAAEATIASQLQTAQHDLLGAVNAPTETLLGRPLIGDGAPGTATSPNGGAGGLLYGNGGNGYSATASGVGGGAGGSAGLIGNGGAGGAGGPNAPGGAGGNGGWLLGNGGIGGPGGASSIPGMSGGAGGTGGAAGLLGWGANGGAGGLGDGVGVDRGTGGAGGRGGLLYGGYGVSGPGGDGRTVPLEIIHVTEPTVHANVNGGPTSTILVDTGSAGLVVSPEDVGGILGVLHMGLPTGLSISGYSGGLYYIFATYTTTVDFGNGIVTAPTAVNVVLLSIPTSPFAISTYFSALLADPTTTPFEAYFGAVGVDGVLGVGPNAVGPGPSIPTMALPGDLNQGVLIDAPAGELVFGPNPLPAPNVEVVGSPITTLYVKIDGGTPIPVPSIIDSGGVTGTIPSYVIGSGTLPANTNIEVYTSPGGDRLYAFNTNDYRPTVISSGLMNTGFLPFRFQPVYIDYSPSGIGTTVFDHPA.

Residues 1–93 form the PE domain; sequence MSFLVVVPEF…SGSYAAAEAT (93 aa). Asp-297 is an active-site residue.

The protein belongs to the mycobacterial PE family. PGRS subfamily. In terms of processing, undergoes auto-proteolytic processing.

The protein resides in the secreted. It is found in the cell surface. Aspartic protease that processes the lipase LipY and other PE_PGRS proteins. Can also cleave itself. This chain is PE cleavage protein A, found in Mycobacterium tuberculosis (strain CDC 1551 / Oshkosh).